The chain runs to 160 residues: Nascent polypeptide-associated complex subunit alpha (160 aa).

In terms of domain architecture, NAC-A/B spans 10 to 75 (TKGEKKTREA…HSFDDIASRL (66 aa)). A UBA domain is found at 120-159 (VNPKDVEVVMKETKASREKVVETLIATKNDLVSAVLELTT).

The protein belongs to the NAC-alpha family. As to quaternary structure, part of the nascent polypeptide-associated complex (NAC), consisting of nacA and nacB.

The protein localises to the cytoplasm. It localises to the nucleus. In terms of biological role, component of the nascent polypeptide-associated complex (NAC), a dynamic component of the ribosomal exit tunnel, protecting the emerging polypeptides from interaction with other cytoplasmic proteins to ensure appropriate nascent protein targeting. The NAC complex also promotes mitochondrial protein import by enhancing productive ribosome interactions with the outer mitochondrial membrane and blocks the inappropriate interaction of ribosomes translating non-secretory nascent polypeptides with translocation sites in the membrane of the endoplasmic reticulum. May also be involved in transcription regulation. The polypeptide is Nascent polypeptide-associated complex subunit alpha (nacA) (Dictyostelium discoideum (Social amoeba)).